The following is a 217-amino-acid chain: 3,4-dihydroxy-2-butanone 4-phosphate synthase (217 aa).

D-ribulose 5-phosphate-binding positions include arginine 37–glutamate 38, aspartate 42, arginine 150–threonine 154, and glutamate 174. Mg(2+) is bound at residue glutamate 38. Histidine 153 contributes to the Mg(2+) binding site.

This sequence belongs to the DHBP synthase family. In terms of assembly, homodimer. Requires Mg(2+) as cofactor. Mn(2+) is required as a cofactor.

It catalyses the reaction D-ribulose 5-phosphate = (2S)-2-hydroxy-3-oxobutyl phosphate + formate + H(+). It participates in cofactor biosynthesis; riboflavin biosynthesis; 2-hydroxy-3-oxobutyl phosphate from D-ribulose 5-phosphate: step 1/1. Catalyzes the conversion of D-ribulose 5-phosphate to formate and 3,4-dihydroxy-2-butanone 4-phosphate. This chain is 3,4-dihydroxy-2-butanone 4-phosphate synthase, found in Desulforapulum autotrophicum (strain ATCC 43914 / DSM 3382 / VKM B-1955 / HRM2) (Desulfobacterium autotrophicum).